Consider the following 399-residue polypeptide: Acetate kinase (399 aa).

Residue asparagine 7 coordinates Mg(2+). An ATP-binding site is contributed by lysine 14. Arginine 89 is a substrate binding site. Residue aspartate 146 is the Proton donor/acceptor of the active site. Residues 206–210, 280–282, and 328–332 contribute to the ATP site; these read HLGNG, DMR, and GIGEN. Residue glutamate 382 participates in Mg(2+) binding.

The protein belongs to the acetokinase family. As to quaternary structure, homodimer. The cofactor is Mg(2+). Mn(2+) serves as cofactor.

It is found in the cytoplasm. The enzyme catalyses acetate + ATP = acetyl phosphate + ADP. The protein operates within metabolic intermediate biosynthesis; acetyl-CoA biosynthesis; acetyl-CoA from acetate: step 1/2. Catalyzes the formation of acetyl phosphate from acetate and ATP. Can also catalyze the reverse reaction. The polypeptide is Acetate kinase (Campylobacter fetus subsp. fetus (strain 82-40)).